A 285-amino-acid chain; its full sequence is Bifunctional protein FolD (285 aa).

NADP(+) contacts are provided by residues 165–167, Thr-192, and Val-233; that span reads GRG.

The protein belongs to the tetrahydrofolate dehydrogenase/cyclohydrolase family. As to quaternary structure, homodimer.

The enzyme catalyses (6R)-5,10-methylene-5,6,7,8-tetrahydrofolate + NADP(+) = (6R)-5,10-methenyltetrahydrofolate + NADPH. It carries out the reaction (6R)-5,10-methenyltetrahydrofolate + H2O = (6R)-10-formyltetrahydrofolate + H(+). It functions in the pathway one-carbon metabolism; tetrahydrofolate interconversion. Its function is as follows. Catalyzes the oxidation of 5,10-methylenetetrahydrofolate to 5,10-methenyltetrahydrofolate and then the hydrolysis of 5,10-methenyltetrahydrofolate to 10-formyltetrahydrofolate. The chain is Bifunctional protein FolD from Corynebacterium jeikeium (strain K411).